A 48-amino-acid chain; its full sequence is Large ribosomal subunit protein bL33A (48 aa).

Belongs to the bacterial ribosomal protein bL33 family.

The sequence is that of Large ribosomal subunit protein bL33A from Streptococcus agalactiae serotype V (strain ATCC BAA-611 / 2603 V/R).